The sequence spans 365 residues: tRNA 2-selenouridine synthase (365 aa).

Residues 15 to 138 (LVSDHPIMDA…MRQFLIETID (124 aa)) form the Rhodanese domain. The S-selanylcysteine intermediate role is filled by Cys98.

It belongs to the SelU family. As to quaternary structure, monomer.

It carries out the reaction 5-methylaminomethyl-2-thiouridine(34) in tRNA + selenophosphate + (2E)-geranyl diphosphate + H2O + H(+) = 5-methylaminomethyl-2-selenouridine(34) in tRNA + (2E)-thiogeraniol + phosphate + diphosphate. The catalysed reaction is 5-methylaminomethyl-2-thiouridine(34) in tRNA + (2E)-geranyl diphosphate = 5-methylaminomethyl-S-(2E)-geranyl-thiouridine(34) in tRNA + diphosphate. The enzyme catalyses 5-methylaminomethyl-S-(2E)-geranyl-thiouridine(34) in tRNA + selenophosphate + H(+) = 5-methylaminomethyl-2-(Se-phospho)selenouridine(34) in tRNA + (2E)-thiogeraniol. It catalyses the reaction 5-methylaminomethyl-2-(Se-phospho)selenouridine(34) in tRNA + H2O = 5-methylaminomethyl-2-selenouridine(34) in tRNA + phosphate. Involved in the post-transcriptional modification of the uridine at the wobble position (U34) of tRNA(Lys), tRNA(Glu) and tRNA(Gln). Catalyzes the conversion of 2-thiouridine (S2U-RNA) to 2-selenouridine (Se2U-RNA). Acts in a two-step process involving geranylation of 2-thiouridine (S2U) to S-geranyl-2-thiouridine (geS2U) and subsequent selenation of the latter derivative to 2-selenouridine (Se2U) in the tRNA chain. The polypeptide is tRNA 2-selenouridine synthase (Shewanella piezotolerans (strain WP3 / JCM 13877)).